The following is a 534-amino-acid chain: Arginine transporter 1 (534 aa).

Helical transmembrane passes span 35–55, 99–119, 126–146, 154–174, 182–202, and 216–236; these read YVLL…YFGW, SLFT…GYLL, AVAL…AFSG, PAFV…LLIV, ALIM…PLVL, and VCIG…FFFI. The N-linked (GlcNAc...) asparagine glycan is linked to Asn246. Residues 261-302 are disordered; that stretch reads TAQSSPKAVDSPPCDEGASSRGRLAVSHNTERTAPDDEQEKD. Over residues 289-302 the composition is skewed to basic and acidic residues; that stretch reads NTERTAPDDEQEKD. 6 helical membrane-spanning segments follow: residues 329–349, 365–385, 388–408, 419–439, 451–471, and 483–503; these read AFTF…WVMA, YTLE…GVVI, IGIM…YVCV, FSVI…YVFV, LIGV…VLYG, and RPVV…LLAM.

This sequence belongs to the SLC43A transporter (TC 2.A.1.44) family.

The protein localises to the cell membrane. The catalysed reaction is L-arginine(in) = L-arginine(out). Functionally, selective L-arginine transporter that is essential for parasite survival and virulence. Does not require other inorganic ions such as sodium, chloride, potassium or calcium. The polypeptide is Arginine transporter 1 (Toxoplasma gondii (strain ATCC 50611 / Me49)).